The following is a 285-amino-acid chain: MGDSRETFGPKAFVTGFPIKHSRSPLIHGYWLKTLGLPGSYRAHEVAPEAFADFIASLKDGSSGFAGGNVTIPHKELAFRLADRPDALSQELGASNTLWLEDDLLHATNTDGRGFTANLDERHPGWDRHDTAVIFGAGGASRAIIQAVRDRGFKTIHVVNRTVGRARELADRFGPKVHAHPAGALAEVMKGAGLFINTTSLGMDGEAAPQLDFTPLTADAVVTDIVYVPLKTPLLAQAQEQGFPIVDGLGMLLHQAVPGFEKWFGKRPVVDAALRALIIADMEAH.

Residues 22–24 (SRS) and Thr-71 contribute to the shikimate site. The active-site Proton acceptor is Lys-75. Shikimate contacts are provided by Asn-96 and Asp-111. NADP(+)-binding positions include 136–140 (GAGGA), 160–165 (NRTVGR), and Ile-225. Residue Tyr-227 participates in shikimate binding. Gly-248 is a binding site for NADP(+).

This sequence belongs to the shikimate dehydrogenase family. As to quaternary structure, homodimer.

It carries out the reaction shikimate + NADP(+) = 3-dehydroshikimate + NADPH + H(+). Its pathway is metabolic intermediate biosynthesis; chorismate biosynthesis; chorismate from D-erythrose 4-phosphate and phosphoenolpyruvate: step 4/7. Its function is as follows. Involved in the biosynthesis of the chorismate, which leads to the biosynthesis of aromatic amino acids. Catalyzes the reversible NADPH linked reduction of 3-dehydroshikimate (DHSA) to yield shikimate (SA). The sequence is that of Shikimate dehydrogenase (NADP(+)) from Rhizobium etli (strain CIAT 652).